Here is a 352-residue protein sequence, read N- to C-terminus: Biotin synthase (352 aa).

Residues 44–262 (NRVQVSTLLS…LAVARILMPQ (219 aa)) form the Radical SAM core domain. [4Fe-4S] cluster-binding residues include Cys-59, Cys-63, and Cys-66. Cys-103, Cys-134, Cys-194, and Arg-266 together coordinate [2Fe-2S] cluster.

Belongs to the radical SAM superfamily. Biotin synthase family. As to quaternary structure, homodimer. Requires [4Fe-4S] cluster as cofactor. [2Fe-2S] cluster is required as a cofactor.

It carries out the reaction (4R,5S)-dethiobiotin + (sulfur carrier)-SH + 2 reduced [2Fe-2S]-[ferredoxin] + 2 S-adenosyl-L-methionine = (sulfur carrier)-H + biotin + 2 5'-deoxyadenosine + 2 L-methionine + 2 oxidized [2Fe-2S]-[ferredoxin]. The protein operates within cofactor biosynthesis; biotin biosynthesis; biotin from 7,8-diaminononanoate: step 2/2. In terms of biological role, catalyzes the conversion of dethiobiotin (DTB) to biotin by the insertion of a sulfur atom into dethiobiotin via a radical-based mechanism. The polypeptide is Biotin synthase (Pseudomonas savastanoi pv. phaseolicola (strain 1448A / Race 6) (Pseudomonas syringae pv. phaseolicola (strain 1448A / Race 6))).